Here is a 330-residue protein sequence, read N- to C-terminus: AA9 family lytic polysaccharide monooxygenase E (330 aa).

The N-terminal stretch at 1–20 (MRSTLVTGLIAGLLSQQAAA) is a signal peptide. Positions 21 and 99 each coordinate Cu(2+). Cys-58 and Cys-193 are oxidised to a cystine. O2 contacts are provided by His-179 and Gln-188. Tyr-190 lines the Cu(2+) pocket. A CBM1 domain is found at 293 to 330 (CSVAKYQQCGGTGYTGCTSCASGSTCSAVSPPYYSQCV).

Belongs to the polysaccharide monooxygenase AA9 family. It depends on Cu(2+) as a cofactor.

The protein localises to the secreted. It carries out the reaction [(1-&gt;4)-beta-D-glucosyl]n+m + reduced acceptor + O2 = 4-dehydro-beta-D-glucosyl-[(1-&gt;4)-beta-D-glucosyl]n-1 + [(1-&gt;4)-beta-D-glucosyl]m + acceptor + H2O.. Functionally, lytic polysaccharide monooxygenase (LPMO) that depolymerizes crystalline and amorphous polysaccharides via the oxidation of scissile alpha- or beta-(1-4)-glycosidic bonds, yielding exclusively C1 oxidation products. Catalysis by LPMOs requires the reduction of the active-site copper from Cu(II) to Cu(I) by a reducing agent and H(2)O(2) or O(2) as a cosubstrate. This Neurospora crassa (strain ATCC 24698 / 74-OR23-1A / CBS 708.71 / DSM 1257 / FGSC 987) protein is AA9 family lytic polysaccharide monooxygenase E (gh61-5).